A 520-amino-acid chain; its full sequence is Peptide chain release factor 3 (520 aa).

Residues 8 to 277 (ESRKTFAIIS…FAPMPNARQT (270 aa)) enclose the tr-type G domain. GTP-binding positions include 17 to 24 (SHPDAGKT), 85 to 89 (DTPGH), and 139 to 142 (NKLD).

This sequence belongs to the TRAFAC class translation factor GTPase superfamily. Classic translation factor GTPase family. PrfC subfamily.

It localises to the cytoplasm. Its function is as follows. Increases the formation of ribosomal termination complexes and stimulates activities of RF-1 and RF-2. It binds guanine nucleotides and has strong preference for UGA stop codons. It may interact directly with the ribosome. The stimulation of RF-1 and RF-2 is significantly reduced by GTP and GDP, but not by GMP. The chain is Peptide chain release factor 3 from Staphylococcus aureus (strain JH1).